The following is a 512-amino-acid chain: 2-isopropylmalate synthase (512 aa).

In terms of domain architecture, Pyruvate carboxyltransferase spans 4-266 (IQFFDTTLRD…ETNIVLNQFK (263 aa)). Mn(2+)-binding residues include Asp-13, His-201, His-203, and Asn-237. The regulatory domain stretch occupies residues 390 to 512 (ELKHLQVQYV…TKQVDFEEVK (123 aa)).

It belongs to the alpha-IPM synthase/homocitrate synthase family. LeuA type 1 subfamily. As to quaternary structure, homodimer. Mn(2+) is required as a cofactor.

It is found in the cytoplasm. It catalyses the reaction 3-methyl-2-oxobutanoate + acetyl-CoA + H2O = (2S)-2-isopropylmalate + CoA + H(+). It functions in the pathway amino-acid biosynthesis; L-leucine biosynthesis; L-leucine from 3-methyl-2-oxobutanoate: step 1/4. Catalyzes the condensation of the acetyl group of acetyl-CoA with 3-methyl-2-oxobutanoate (2-ketoisovalerate) to form 3-carboxy-3-hydroxy-4-methylpentanoate (2-isopropylmalate). This chain is 2-isopropylmalate synthase, found in Listeria welshimeri serovar 6b (strain ATCC 35897 / DSM 20650 / CCUG 15529 / CIP 8149 / NCTC 11857 / SLCC 5334 / V8).